A 206-amino-acid polypeptide reads, in one-letter code: Sclerostin domain-containing protein 1 (206 aa).

Residues 1–23 (MLPPAIHFYLLPLACILMKSCLA) form the signal peptide. Asn47 carries an N-linked (GlcNAc...) asparagine glycan. Disulfide bonds link Cys75-Cys133, Cys89-Cys147, Cys100-Cys163, and Cys104-Cys165. The CTCK domain maps to 75–170 (CRELRSTKYI…TACKCKRYTR (96 aa)). The N-linked (GlcNAc...) asparagine glycan is linked to Asn173. The disordered stretch occupies residues 174 to 206 (ESSHNFESMSPAKPVQHHRERKRASKSSKHSMS). A compositionally biased stretch (basic residues) spans 188-206 (VQHHRERKRASKSSKHSMS).

Belongs to the sclerostin family. Interacts with BMP2, BMP4, BMP6 and BMP7 with high affinity. Highly expressed in kidney and weakly in lung.

It localises to the secreted. Functionally, may be involved in the onset of endometrial receptivity for implantation/sensitization for the decidual cell reaction Enhances Wnt signaling and inhibits TGF-beta signaling. Directly antagonizes activity of BMP2, BMP4, BMP6 and BMP7 in a dose-dependent manner. The sequence is that of Sclerostin domain-containing protein 1 (SOSTDC1) from Homo sapiens (Human).